Here is a 282-residue protein sequence, read N- to C-terminus: Large ribosomal subunit protein uL2 (282 aa).

The tract at residues 223–282 (TVRGSVMNPNDHPHGGGEGRAPIGRKSPVTPWGKKALGVKTRNTKKTSEKLIVRKRSNKK) is disordered.

This sequence belongs to the universal ribosomal protein uL2 family. In terms of assembly, part of the 50S ribosomal subunit. Forms a bridge to the 30S subunit in the 70S ribosome.

In terms of biological role, one of the primary rRNA binding proteins. Required for association of the 30S and 50S subunits to form the 70S ribosome, for tRNA binding and peptide bond formation. It has been suggested to have peptidyltransferase activity; this is somewhat controversial. Makes several contacts with the 16S rRNA in the 70S ribosome. The chain is Large ribosomal subunit protein uL2 from Mycoplasma mycoides subsp. mycoides SC (strain CCUG 32753 / NCTC 10114 / PG1).